The primary structure comprises 422 residues: Dihydroorotase (422 aa).

Residues H59 and H61 each contribute to the Zn(2+) site. Substrate contacts are provided by residues 61–63 (HFR) and N93. Zn(2+) is bound by residues D150, H177, and H230. N276 lines the substrate pocket. D303 provides a ligand contact to Zn(2+). D303 is a catalytic residue. H307 contacts substrate.

The protein belongs to the metallo-dependent hydrolases superfamily. DHOase family. Class I DHOase subfamily. Zn(2+) serves as cofactor.

The enzyme catalyses (S)-dihydroorotate + H2O = N-carbamoyl-L-aspartate + H(+). Its pathway is pyrimidine metabolism; UMP biosynthesis via de novo pathway; (S)-dihydroorotate from bicarbonate: step 3/3. In terms of biological role, catalyzes the reversible cyclization of carbamoyl aspartate to dihydroorotate. This chain is Dihydroorotase, found in Streptococcus pyogenes serotype M3 (strain ATCC BAA-595 / MGAS315).